The sequence spans 227 residues: A-type potassium channel modulatory protein KCNIP1 (227 aa).

Residues 38–94 (LEMTMVCHRPEGLEQLEAQTNFTKRELQVLYRGFKNECPSGVVNEDTFKQIYAQFFP) enclose the EF-hand 1; degenerate domain. EF-hand domains are found at residues 97–132 (DASTYAHYLFNAFDTTQTGSVKFEDFVTALSILLRG), 133–168 (TVHEKLRWTFNLYDINKDGYINKEEMMDIVKAIYDM), and 181–216 (TPRQHVDVFFQKMDKNKDGIVTLDEFLESCQEDDNI). Ca(2+)-binding residues include Asp146, Asn148, Asp150, Tyr152, Glu157, Asp194, Asn196, Asp198, and Glu205. Residues 214–227 (DNIMRSLQLFQNVM) are interaction with KCND2.

It belongs to the recoverin family. As to quaternary structure, component of heteromultimeric potassium channels. Identified in potassium channel complexes containing KCND1, KCND2, KCND3, KCNIP1, KCNIP2, KCNIP3, KCNIP4, DPP6 and DPP10. Part of a heterooctamer composed of the tetrameric channel and four KCNIP1 chains. Probably part of a complex consisting of KCNIP1, KCNIP2 isoform 3 and KCND2. Self-associates to form homodimers and homotetramers. Interacts with KCNIP2 isoform 3 in a calcium-dependent manner. Interacts with Naja atra venom CTX3. Interacts with KCND2; this interaction mediates the capture of both the N- and C-terminus of KCND2, thus preventing KCND2 N-type inactivation and modulates the channel gating kinetics. Interacts with KCND3; each KCNIP1 monomer interacts with two adjacent KCND3 subunits, through both the N-terminal inactivation ball of a KCND3 subunit and a C-terminal helix from the adjacent KCND3 subunit, clamping them together; this interaction stabilizes the tetrameric form and modulates the channel gating kinetics namely channel activation and inactivation kinetics and rate of recovery from inactivation. Isoform 1 and isoform 2 are expressed in brain and kidney. Isoform 1 is also expressed in liver, pancreas, skeletal muscle, small intestine and testis. Isoform 2 is also expressed in lung, pancreas, leukocytes, prostate and thymus.

It is found in the cell membrane. The protein resides in the cytoplasm. It localises to the cell projection. The protein localises to the dendrite. Its function is as follows. Regulatory subunit of Kv4/D (Shal)-type voltage-gated rapidly inactivating A-type potassium channels. Regulates channel density, inactivation kinetics and rate of recovery from inactivation in a calcium-dependent and isoform-specific manner. In vitro, modulates KCND1/Kv4.1 and KCND2/Kv4.2 currents. Increases the presence of KCND2 at the cell surface. In Homo sapiens (Human), this protein is A-type potassium channel modulatory protein KCNIP1.